A 349-amino-acid chain; its full sequence is 3-isopropylmalate dehydrogenase (349 aa).

Substrate is bound by residues R91, R101, R129, and D219. D219, D243, and D247 together coordinate Mg(2+). Position 277–289 (277–289 (GSAPDIAGLGKAN)) interacts with NAD(+).

It belongs to the isocitrate and isopropylmalate dehydrogenases family. LeuB type 1 subfamily. In terms of assembly, homodimer. It depends on Mg(2+) as a cofactor. Mn(2+) is required as a cofactor.

It is found in the cytoplasm. It catalyses the reaction (2R,3S)-3-isopropylmalate + NAD(+) = 4-methyl-2-oxopentanoate + CO2 + NADH. The protein operates within amino-acid biosynthesis; L-leucine biosynthesis; L-leucine from 3-methyl-2-oxobutanoate: step 3/4. Functionally, catalyzes the oxidation of 3-carboxy-2-hydroxy-4-methylpentanoate (3-isopropylmalate) to 3-carboxy-4-methyl-2-oxopentanoate. The product decarboxylates to 4-methyl-2 oxopentanoate. The sequence is that of 3-isopropylmalate dehydrogenase from Zymomonas mobilis subsp. mobilis (strain ATCC 31821 / ZM4 / CP4).